The primary structure comprises 152 residues: Transcriptional regulator MraZ (152 aa).

SpoVT-AbrB domains lie at 5–52 (ATMV…PLPE) and 81–124 (ASEC…DEQT).

It belongs to the MraZ family. As to quaternary structure, forms oligomers.

Its subcellular location is the cytoplasm. The protein resides in the nucleoid. Functionally, negatively regulates its own expression and that of the subsequent genes in the proximal part of the division and cell wall (dcw) gene cluster. Acts by binding directly to DNA. May also regulate the expression of genes outside the dcw cluster. This Yersinia pestis bv. Antiqua (strain Antiqua) protein is Transcriptional regulator MraZ.